Here is a 208-residue protein sequence, read N- to C-terminus: 2,3-bisphosphoglycerate-dependent phosphoglycerate mutase (208 aa).

Substrate-binding positions include 9-16, 22-23, arginine 61, 88-91, lysine 99, 115-116, and 159-160; these read RHGQSEWN, TG, ERDY, RR, and GN. Catalysis depends on histidine 10, which acts as the Tele-phosphohistidine intermediate. Glutamate 88 acts as the Proton donor/acceptor in catalysis.

It belongs to the phosphoglycerate mutase family. BPG-dependent PGAM subfamily. In terms of assembly, homodimer.

It carries out the reaction (2R)-2-phosphoglycerate = (2R)-3-phosphoglycerate. It participates in carbohydrate degradation; glycolysis; pyruvate from D-glyceraldehyde 3-phosphate: step 3/5. Catalyzes the interconversion of 2-phosphoglycerate and 3-phosphoglycerate. This chain is 2,3-bisphosphoglycerate-dependent phosphoglycerate mutase, found in Methylobacterium sp. (strain 4-46).